A 315-amino-acid chain; its full sequence is 4-carboxy-2-hydroxymuconate-6-semialdehyde dehydrogenase (315 aa).

Belongs to the Gfo/Idh/MocA family. As to quaternary structure, homodimer.

It catalyses the reaction 4-carboxy-2-hydroxymuconate semialdehyde hemiacetal + NADP(+) = 2-oxo-2H-pyran-4,6-dicarboxylate + NADPH + H(+). It functions in the pathway secondary metabolite metabolism; lignin degradation. Its activity is regulated as follows. Inhibited by p-chloromercuribenzoate (10 mM), HgCl2 (10 mM), or 5,5-dithiobis(2-nitrobenzoate) (100 mM). Functionally, involved in the degradation of protocatechuate (PCA) via the PCA 4,5-cleavage pathway. Catalyzes the oxidation of the hemiacetal form of 4-carboxy-2-hydroxymuconate-6-semialdehyde (CHMS) to produce 2-pyrone-4,6-dicarboxylate (PDC). LigC has 10-times-higher affinity to NADP than to NAD. This chain is 4-carboxy-2-hydroxymuconate-6-semialdehyde dehydrogenase (ligC), found in Sphingobium sp. (strain NBRC 103272 / SYK-6).